Consider the following 105-residue polypeptide: Met repressor (105 aa).

Belongs to the MetJ family. As to quaternary structure, homodimer.

The protein resides in the cytoplasm. This regulatory protein, when combined with SAM (S-adenosylmethionine) represses the expression of the methionine regulon and of enzymes involved in SAM synthesis. The protein is Met repressor of Klebsiella pneumoniae subsp. pneumoniae (strain ATCC 700721 / MGH 78578).